We begin with the raw amino-acid sequence, 309 residues long: Aspartate carbamoyltransferase catalytic subunit (309 aa).

Residues R55 and T56 each contribute to the carbamoyl phosphate site. K85 contacts L-aspartate. The carbamoyl phosphate site is built by R106, H135, and Q138. 2 residues coordinate L-aspartate: R168 and R230. Carbamoyl phosphate contacts are provided by L268 and P269.

The protein belongs to the aspartate/ornithine carbamoyltransferase superfamily. ATCase family. As to quaternary structure, heterododecamer (2C3:3R2) of six catalytic PyrB chains organized as two trimers (C3), and six regulatory PyrI chains organized as three dimers (R2).

It catalyses the reaction carbamoyl phosphate + L-aspartate = N-carbamoyl-L-aspartate + phosphate + H(+). It functions in the pathway pyrimidine metabolism; UMP biosynthesis via de novo pathway; (S)-dihydroorotate from bicarbonate: step 2/3. In terms of biological role, catalyzes the condensation of carbamoyl phosphate and aspartate to form carbamoyl aspartate and inorganic phosphate, the committed step in the de novo pyrimidine nucleotide biosynthesis pathway. This Aliivibrio salmonicida (strain LFI1238) (Vibrio salmonicida (strain LFI1238)) protein is Aspartate carbamoyltransferase catalytic subunit.